A 414-amino-acid polypeptide reads, in one-letter code: Glutathione gamma-glutamylcysteinyltransferase (414 aa).

The region spanning Q37 to I256 is the Peptidase C83 domain.

This sequence belongs to the phytochelatin synthase family.

It carries out the reaction [Glu(-Cys)](n)-Gly + glutathione + H(+) = [Glu(-Cys)](n+1)-Gly + glycine. Functionally, required for detoxification of heavy metals such as cadmium and arsenate. This is Glutathione gamma-glutamylcysteinyltransferase from Schizosaccharomyces pombe (strain 972 / ATCC 24843) (Fission yeast).